The primary structure comprises 641 residues: Chaperone protein DnaK (641 aa).

Thr200 carries the phosphothreonine; by autocatalysis modification. Residues 605-623 are compositionally biased toward low complexity; that stretch reads AAEQGGSADAASGNAQASK. The interval 605–628 is disordered; the sequence is AAEQGGSADAASGNAQASKAADDV.

Belongs to the heat shock protein 70 family.

In terms of biological role, acts as a chaperone. The protein is Chaperone protein DnaK of Xanthomonas oryzae pv. oryzae (strain KACC10331 / KXO85).